The chain runs to 1006 residues: E3 ubiquitin-protein ligase MIB1 (1006 aa).

Positions 6–74 constitute an MIB/HERC2 1 domain; that stretch reads NNRVMVEGVG…AYDLRILDSA (69 aa). The ZZ-type zinc finger occupies 80–132; it reads HDGTMCDTCRQQPIIGIRWKCAECTNYDLCTVCYHGDKHHLRHRFYRITTPGS. Positions 85, 88, 100, 103, 109, 112, 118, and 122 each coordinate Zn(2+). The MIB/HERC2 2 domain maps to 143 to 221; sequence SKKITARGIF…MSDLKCVQDA (79 aa). The residue at position 408 (Ser408) is a Phosphoserine. ANK repeat units follow at residues 430 to 460, 463 to 492, 496 to 525, 529 to 558, 562 to 591, 595 to 627, 631 to 661, 665 to 694, and 698 to 729; these read DLNE…DVNG, AGHT…DVEA, DGDR…DLNA, RRQT…HPSL, EGDT…DVTI, NGFN…IVDE, DGYT…NLDI, NQQT…KLDI, and DGDT…KVDA. 2 RING-type zinc fingers span residues 819–854 and 866–901; these read CMVC…LICK and CVVC…VQCR. A coiled-coil region spans residues 935–962; that stretch reads QKDKDNTNVNADVQKLQQQLQDIKEQTM. The segment at 963-996 adopts an RING-type 3 zinc-finger fold; it reads CPVCLDRLKNMIFLCGHGTCQLCGDRMSECPICR.

In terms of assembly, interacts with CEP131 and PCM1. Ubiquitinated; possibly via autoubiquitination. Ubiquitinated; this modification is inhibited in response to cellular stress, such as ultraviolet light (UV) radiation or heat shock. Widely expressed at low level. Expressed at higher level in spinal cord, ovary, whole brain, and all specific brain regions examined.

The protein resides in the cytoplasm. It localises to the cytoskeleton. It is found in the microtubule organizing center. The protein localises to the centrosome. Its subcellular location is the centriolar satellite. The protein resides in the cell membrane. It catalyses the reaction S-ubiquitinyl-[E2 ubiquitin-conjugating enzyme]-L-cysteine + [acceptor protein]-L-lysine = [E2 ubiquitin-conjugating enzyme]-L-cysteine + N(6)-ubiquitinyl-[acceptor protein]-L-lysine.. It functions in the pathway protein modification; protein ubiquitination. E3 ubiquitin-protein ligase that mediates ubiquitination of Delta receptors, which act as ligands of Notch proteins. Positively regulates the Delta-mediated Notch signaling by ubiquitinating the intracellular domain of Delta, leading to endocytosis of Delta receptors. Probably mediates ubiquitination and subsequent proteasomal degradation of DAPK1, thereby antagonizing anti-apoptotic effects of DAPK1 to promote TNF-induced apoptosis. Involved in ubiquitination of centriolar satellite CEP131, CEP290 and PCM1 proteins and hence inhibits primary cilium formation in proliferating cells. Mediates 'Lys-63'-linked polyubiquitination of TBK1, which probably participates in kinase activation. Functionally, (Microbial infection) During adenovirus infection, mediates ubiquitination of Core-capsid bridging protein. This allows viral genome delivery into nucleus for infection. The chain is E3 ubiquitin-protein ligase MIB1 (MIB1) from Homo sapiens (Human).